The primary structure comprises 482 residues: NADH-quinone oxidoreductase subunit N (482 aa).

The next 14 helical transmembrane spans lie at 11–31 (AVPE…GVFI), 37–57 (IPYY…WYIF), 77–97 (RFSV…FIYA), 106–126 (IPHT…VALV), 131–151 (LLTV…MVAL), 166–186 (FVIG…IFGA), 208–228 (LILV…LGTA), 255–275 (IAAY…LHVQ), 279–299 (MLIV…IVQS), 304–324 (MLAY…LCGT), 332–352 (MFYT…VVLM), 376–396 (AFMM…VGFI), 404–424 (ALIQ…AIVG), and 462–482 (LAVL…HLAF).

It belongs to the complex I subunit 2 family. In terms of assembly, NDH-1 is composed of 14 different subunits. Subunits NuoA, H, J, K, L, M, N constitute the membrane sector of the complex.

It is found in the cell inner membrane. It catalyses the reaction a quinone + NADH + 5 H(+)(in) = a quinol + NAD(+) + 4 H(+)(out). Functionally, NDH-1 shuttles electrons from NADH, via FMN and iron-sulfur (Fe-S) centers, to quinones in the respiratory chain. The immediate electron acceptor for the enzyme in this species is believed to be ubiquinone. Couples the redox reaction to proton translocation (for every two electrons transferred, four hydrogen ions are translocated across the cytoplasmic membrane), and thus conserves the redox energy in a proton gradient. The protein is NADH-quinone oxidoreductase subunit N of Coxiella burnetii (strain RSA 493 / Nine Mile phase I).